Reading from the N-terminus, the 307-residue chain is Nucleotide-binding protein Sca_0414 (307 aa).

Residue 19 to 26 coordinates ATP; sequence GMSGAGKS. 70–73 serves as a coordination point for GTP; it reads DLRG.

Belongs to the RapZ-like family.

In terms of biological role, displays ATPase and GTPase activities. The protein is Nucleotide-binding protein Sca_0414 of Staphylococcus carnosus (strain TM300).